Consider the following 217-residue polypeptide: Adenylate kinase (217 aa).

Residue 10–15 (GAGKGT) participates in ATP binding. Residues 30 to 59 (STGDIFRSNIKNGTELGRKAKEYIDKGLLV) form an NMP region. AMP is bound by residues threonine 31, arginine 36, 57 to 59 (LLV), 85 to 88 (GFPR), and glutamine 92. The interval 126–163 (GRRVCSKCGMSYHIVYNQPKVENICDSCNGELIQRDDD) is LID. An ATP-binding site is contributed by arginine 127. Zn(2+) contacts are provided by cysteine 130 and cysteine 133. 136–137 (SY) provides a ligand contact to ATP. Cysteine 150 and cysteine 153 together coordinate Zn(2+). Residues arginine 160 and arginine 171 each coordinate AMP. Glutamate 199 is a binding site for ATP.

Belongs to the adenylate kinase family. In terms of assembly, monomer.

The protein localises to the cytoplasm. It carries out the reaction AMP + ATP = 2 ADP. It functions in the pathway purine metabolism; AMP biosynthesis via salvage pathway; AMP from ADP: step 1/1. Catalyzes the reversible transfer of the terminal phosphate group between ATP and AMP. Plays an important role in cellular energy homeostasis and in adenine nucleotide metabolism. This is Adenylate kinase from Acetivibrio thermocellus (strain ATCC 27405 / DSM 1237 / JCM 9322 / NBRC 103400 / NCIMB 10682 / NRRL B-4536 / VPI 7372) (Clostridium thermocellum).